The sequence spans 230 residues: UPF0702 transmembrane protein YcaP (230 aa).

3 consecutive transmembrane segments (helical) span residues 16 to 36 (FDFL…VFLF), 48 to 68 (MSLF…DVAF), and 75 to 95 (VPVL…MWLM).

This sequence belongs to the UPF0702 family.

The protein localises to the cell membrane. This is UPF0702 transmembrane protein YcaP (ycaP) from Escherichia coli (strain K12).